A 365-amino-acid polypeptide reads, in one-letter code: MHIKDQLKQLKPYQPGKPIEEVKKEYQLDKIVKLASNENPFGCSTHAREAIQAELEHLAIYPDGYSASLRTELAEFLQVNEKQLIFGNGSDELVQIIARAFLDQHTNTVIPSPSFPQYRHNAIIEQAEIREVSLLDGGAHDLKGMLDEIDENTKVVWVCNPNNPTGNHLSESELVAFLDQVPAHVLVVLDEAYVEYVRAEDYPNSLSLLHSYQNVIVLRTFSKAYGLAALRVGYGIASEELITAIEPAREPFNTSRIAQAAARAAIKDQDFIQSCRQKNEAGLKQYQEFADRFGLFIYPSQTNFVLIDFKRDADELFHALLKKGYIVRSGKVLGFPTSLRITVGTMEQNAEILSTLADLLQGIRA.

K223 bears the N6-(pyridoxal phosphate)lysine mark.

The protein belongs to the class-II pyridoxal-phosphate-dependent aminotransferase family. Histidinol-phosphate aminotransferase subfamily. Homodimer. The cofactor is pyridoxal 5'-phosphate.

It carries out the reaction L-histidinol phosphate + 2-oxoglutarate = 3-(imidazol-4-yl)-2-oxopropyl phosphate + L-glutamate. Its pathway is amino-acid biosynthesis; L-histidine biosynthesis; L-histidine from 5-phospho-alpha-D-ribose 1-diphosphate: step 7/9. This is Histidinol-phosphate aminotransferase from Bacillus pumilus (strain SAFR-032).